We begin with the raw amino-acid sequence, 329 residues long: GTP 3',8-cyclase (329 aa).

Residues 8-234 enclose the Radical SAM core domain; it reads AFARKFYYLR…QLRQRSDGPA (227 aa). A GTP-binding site is contributed by Arg17. 2 residues coordinate [4Fe-4S] cluster: Cys24 and Cys28. Tyr30 contacts S-adenosyl-L-methionine. Position 31 (Cys31) interacts with [4Fe-4S] cluster. Arg68 contacts GTP. Residue Gly72 participates in S-adenosyl-L-methionine binding. Residue Thr99 coordinates GTP. Ser123 serves as a coordination point for S-adenosyl-L-methionine. Lys160 contacts GTP. Met194 lines the S-adenosyl-L-methionine pocket. Residues Cys257 and Cys260 each coordinate [4Fe-4S] cluster. 262-264 contributes to the GTP binding site; sequence RLR. Cys274 is a [4Fe-4S] cluster binding site.

This sequence belongs to the radical SAM superfamily. MoaA family. As to quaternary structure, monomer and homodimer. The cofactor is [4Fe-4S] cluster.

The enzyme catalyses GTP + AH2 + S-adenosyl-L-methionine = (8S)-3',8-cyclo-7,8-dihydroguanosine 5'-triphosphate + 5'-deoxyadenosine + L-methionine + A + H(+). Its pathway is cofactor biosynthesis; molybdopterin biosynthesis. Catalyzes the cyclization of GTP to (8S)-3',8-cyclo-7,8-dihydroguanosine 5'-triphosphate. The polypeptide is GTP 3',8-cyclase (Shigella boydii serotype 18 (strain CDC 3083-94 / BS512)).